We begin with the raw amino-acid sequence, 1005 residues long: MSNNKVRIYDLSRDLNLDNRDVLIICEQLNIPVKSHSSTISESEADRIRAAAEKYVPSPSTHSMPPTRPTSHSRPLPPQPGKPQPKVPQTKVPQILELRRHQTPAEPATGSAGSSVAPVSRSPVEPQAGLPKTASPQRPVRPAAPGSNSPSHSESTPVTPPAISKPAVSSSPARTEPLRPAVPPPKAAPSPAAMAGRAEPSQPGPQKPVLKRPKVESPQAEVESAPVATATPAPASPRAELTPPPRRELPQLKAPPRPRSETSEDGARRGEKLVARAPEPPGTETDAIEVLQNVSLPKLAGRGAKRPKTKAEEEDELQEELAAKTPKTATKLKRRPQLKLEDEDDVDFAAEVNVQAVVDVSQSLVRPPKPKAAKSAKPAAVATTRISAPKTGGRKLSRRDRRQQEETQERPTSVVLSGDLTVQELANRLALPTSEIIKTLFFKGIAATINQMLDLETASMVAREMGMEVETPEVESTARKVTEMLEAQDLENLQRRPPVVTIMGHVDHGKTTLLDAIRQTKVAQGEAGGITQHIGAYHVDVEHEDQVQQVVFLDTPGHEAFTAMRARGARVTDIAILVVAADDGVRPQTVEAISHAQAAEVPIVVAINKIDKPTAQPDRVKQELTEYNLVPEEWGGDTIMVPVSAINRENLDTLLEMILLVSEVEDLYANPDRSARGTVIEAHLDKARGPVATLLVQNGTLRVGDILLAGSALGKVRAMIDDRGQRVEAATPSFAVEVLGLGDVPAAGDEFEVFNDEREARAIANERANQQRLSRLQQALSSRRVSLTSLSDQAREGELKELNLILKADVQGSVEAILNALGQIPQNEVQLRVLYAAPGEVTETDVDLAAASNAVVIGFNTTLASGSRASADQTGVDIREYNIIYKLLDDIEGAMEGLLEPELVEEPLGQAQVRAVFPVGKGFVAGCYVQSGKLIRNCKIRVLRSGNLVHSGTLNSLKRIKEDAREVNAGYECGIRLDDFQGWAEGDQIEAYQMVTKRRTLNPNA.

Disordered regions lie at residues Lys54 to Gln337 and Pro368 to Val414. Residues Ser58–Ser73 are compositionally biased toward polar residues. Over residues Pro75–Lys86 the composition is skewed to pro residues. Positions Gly146–Pro157 are enriched in polar residues. Composition is skewed to low complexity over residues Pro189 to Ala198 and Val222 to Glu240. A compositionally biased stretch (basic and acidic residues) spans Pro258–Val274. The segment covering Gly392–Arg401 has biased composition (basic residues). The tr-type G domain occupies Arg495–Tyr668. The tract at residues Gly504–Thr511 is G1. Gly504–Thr511 is a binding site for GTP. The tract at residues Gly529 to His533 is G2. Residues Asp554–Gly557 are G3. GTP contacts are provided by residues Asp554–His558 and Asn608–Asp611. The tract at residues Asn608–Asp611 is G4. A G5 region spans residues Ser644–Ile646.

Belongs to the TRAFAC class translation factor GTPase superfamily. Classic translation factor GTPase family. IF-2 subfamily.

It is found in the cytoplasm. In terms of biological role, one of the essential components for the initiation of protein synthesis. Protects formylmethionyl-tRNA from spontaneous hydrolysis and promotes its binding to the 30S ribosomal subunits. Also involved in the hydrolysis of GTP during the formation of the 70S ribosomal complex. The chain is Translation initiation factor IF-2 from Cyanothece sp. (strain PCC 7425 / ATCC 29141).